Consider the following 468-residue polypeptide: Lysosomal dipeptide transporter MFSD1 (468 aa).

The interval 1–25 (MEDEEEEARALLPGGSDEAGRETRA) is disordered. The short motif at 11 to 12 (LL) is the Dileucine internalization motif element. A run of 12 helical transmembrane segments spans residues 42–62 (LAHR…SYFC), 86–106 (LLYA…GFLI), 116–136 (TIIF…GGIF), 138–158 (AFWL…SLAV), 173–194 (LNLV…NMNL), 218–238 (LMIG…LAYL), 270–290 (WLIF…IGLV), 307–327 (AINS…GLLV), 334–354 (IIWV…LAFT), 364–384 (LLGL…AFVV), 395–415 (FMQS…GMIL), and 421–441 (LFLE…VVLL).

Belongs to the major facilitator superfamily. In terms of assembly, homodimer. Interacts with lysosomal protein GLMP (via lumenal domain); the interaction starts while both proteins are still in the endoplasmic reticulum and is required for stabilization of MFSD1 in lysosomes but has no direct effect on its targeting to lysosomes or transporter activity.

Its subcellular location is the lysosome membrane. The catalysed reaction is L-alpha-aminoacyl-L-arginine(out) = L-alpha-aminoacyl-L-arginine(in). It carries out the reaction L-arginyl-L-alpha-amino acid(out) = L-arginyl-L-alpha-amino acid(in). It catalyses the reaction L-arginyl-glycine(out) = L-arginyl-glycine(in). The enzyme catalyses L-alpha-aminoacyl-L-lysine(out) = L-alpha-aminoacyl-L-lysine(in). The catalysed reaction is L-aspartyl-L-lysine(out) = L-aspartyl-L-lysine(in). It carries out the reaction L-alanyl-L-lysine(out) = L-alanyl-L-lysine(in). It catalyses the reaction L-lysyl-L-alpha-amino acid(out) = L-lysyl-L-alpha-amino acid(in). The enzyme catalyses L-lysyl-L-alanine(out) = L-lysyl-L-alanine(in). The catalysed reaction is L-lysyl-L-lysine(out) = L-lysyl-L-lysine(in). It carries out the reaction L-lysyl-glycine(out) = L-lysyl-glycine(in). It catalyses the reaction L-alpha-aminoacyl-L-histidine(out) = L-alpha-aminoacyl-L-histidine(in). The enzyme catalyses L-histidyl-L-alpha-amino acid(out) = L-histidyl-L-alpha-amino acid(in). The catalysed reaction is L-histidyl-glycine(out) = L-histidyl-glycine(in). In terms of biological role, lysosomal dipeptide uniporter that selectively exports lysine, arginine or histidine-containing dipeptides with a net positive charge from the lysosome lumen into the cytosol. Could play a role in a specific type of protein O-glycosylation indirectly regulating macrophages migration and tissue invasion. Also essential for liver homeostasis. The protein is Lysosomal dipeptide transporter MFSD1 of Bos taurus (Bovine).